The following is a 230-amino-acid chain: Cytochrome c oxidase subunit 2 (230 aa).

The Mitochondrial intermembrane segment spans residues 1-14 (MAHPTQLGFQDAAS). The chain crosses the membrane as a helical span at residues 15-45 (PVMEELLHFHDHALMIVFLISTLVLYIIIAM). The Mitochondrial matrix segment spans residues 46-59 (VSTKLTNKYILDSQ). The helical transmembrane segment at 60-87 (EIEIVWTILPAVILVLIALPSLRILYLM) threads the bilayer. Over 88–230 (DEINDPHLTI…NWSSLMLEDA (143 aa)) the chain is Mitochondrial intermembrane. Cu cation is bound by residues His-161, Cys-196, Glu-198, Cys-200, His-204, and Met-207. Residue Glu-198 participates in Mg(2+) binding.

Belongs to the cytochrome c oxidase subunit 2 family. As to quaternary structure, component of the cytochrome c oxidase (complex IV, CIV), a multisubunit enzyme composed of 14 subunits. The complex is composed of a catalytic core of 3 subunits MT-CO1, MT-CO2 and MT-CO3, encoded in the mitochondrial DNA, and 11 supernumerary subunits COX4I, COX5A, COX5B, COX6A, COX6B, COX6C, COX7A, COX7B, COX7C, COX8 and NDUFA4, which are encoded in the nuclear genome. The complex exists as a monomer or a dimer and forms supercomplexes (SCs) in the inner mitochondrial membrane with NADH-ubiquinone oxidoreductase (complex I, CI) and ubiquinol-cytochrome c oxidoreductase (cytochrome b-c1 complex, complex III, CIII), resulting in different assemblies (supercomplex SCI(1)III(2)IV(1) and megacomplex MCI(2)III(2)IV(2)). Found in a complex with TMEM177, COA6, COX18, COX20, SCO1 and SCO2. Interacts with TMEM177 in a COX20-dependent manner. Interacts with COX20. Interacts with COX16. The cofactor is Cu cation.

Its subcellular location is the mitochondrion inner membrane. It carries out the reaction 4 Fe(II)-[cytochrome c] + O2 + 8 H(+)(in) = 4 Fe(III)-[cytochrome c] + 2 H2O + 4 H(+)(out). Component of the cytochrome c oxidase, the last enzyme in the mitochondrial electron transport chain which drives oxidative phosphorylation. The respiratory chain contains 3 multisubunit complexes succinate dehydrogenase (complex II, CII), ubiquinol-cytochrome c oxidoreductase (cytochrome b-c1 complex, complex III, CIII) and cytochrome c oxidase (complex IV, CIV), that cooperate to transfer electrons derived from NADH and succinate to molecular oxygen, creating an electrochemical gradient over the inner membrane that drives transmembrane transport and the ATP synthase. Cytochrome c oxidase is the component of the respiratory chain that catalyzes the reduction of oxygen to water. Electrons originating from reduced cytochrome c in the intermembrane space (IMS) are transferred via the dinuclear copper A center (CU(A)) of subunit 2 and heme A of subunit 1 to the active site in subunit 1, a binuclear center (BNC) formed by heme A3 and copper B (CU(B)). The BNC reduces molecular oxygen to 2 water molecules using 4 electrons from cytochrome c in the IMS and 4 protons from the mitochondrial matrix. The chain is Cytochrome c oxidase subunit 2 (mt-co2) from Carassius auratus (Goldfish).